The sequence spans 723 residues: Probable dipeptidyl-peptidase 5 (723 aa).

Residues 1–19 form the signal peptide; sequence MAALRWLSAVVAVSTTVLA. 6 N-linked (GlcNAc...) asparagine glycosylation sites follow: asparagine 79, asparagine 97, asparagine 154, asparagine 255, asparagine 381, and asparagine 451. Serine 561 acts as the Charge relay system in catalysis. Asparagine 608 is a glycosylation site (N-linked (GlcNAc...) asparagine). Catalysis depends on charge relay system residues aspartate 644 and histidine 676.

This sequence belongs to the peptidase S9C family.

It is found in the secreted. In terms of biological role, extracellular dipeptidyl-peptidase which removes N-terminal dipeptides sequentially from polypeptides having unsubstituted N-termini. The polypeptide is Probable dipeptidyl-peptidase 5 (dpp5) (Aspergillus terreus (strain NIH 2624 / FGSC A1156)).